A 96-amino-acid chain; its full sequence is (4S)-4-hydroxy-5-phosphonooxypentane-2,3-dione isomerase (96 aa).

Residues 2-91 enclose the ABM domain; the sequence is HVTLVEINVH…MTGPRKKRLF (90 aa).

Belongs to the LsrG family. As to quaternary structure, homodimer.

It localises to the cytoplasm. It carries out the reaction (2S)-2-hydroxy-3,4-dioxopentyl phosphate = 3-hydroxy-2,4-dioxopentyl phosphate. Functionally, involved in the degradation of phospho-AI-2, thereby terminating induction of the lsr operon and closing the AI-2 signaling cycle. Catalyzes the conversion of (4S)-4-hydroxy-5-phosphonooxypentane-2,3-dione (P-DPD) to 3-hydroxy-5-phosphonooxypentane-2,4-dione (P-HPD). The polypeptide is (4S)-4-hydroxy-5-phosphonooxypentane-2,3-dione isomerase (Escherichia coli O9:H4 (strain HS)).